A 326-amino-acid polypeptide reads, in one-letter code: Pyruvate dehydrogenase E1 component subunit alpha (326 aa).

In terms of assembly, heterodimer of an alpha and a beta chain. The cofactor is thiamine diphosphate.

The catalysed reaction is N(6)-[(R)-lipoyl]-L-lysyl-[protein] + pyruvate + H(+) = N(6)-[(R)-S(8)-acetyldihydrolipoyl]-L-lysyl-[protein] + CO2. Its function is as follows. The pyruvate dehydrogenase complex catalyzes the overall conversion of pyruvate to acetyl-CoA and CO(2). It contains multiple copies of three enzymatic components: pyruvate dehydrogenase (E1), dihydrolipoamide acetyltransferase (E2) and lipoamide dehydrogenase (E3). The polypeptide is Pyruvate dehydrogenase E1 component subunit alpha (pdhA) (Rickettsia bellii (strain RML369-C)).